The sequence spans 109 residues: U4-lycotoxin-Ls1d (109 aa).

The N-terminal stretch at 1-22 (MKVLVLFSVLFLTLFSYSSTEA) is a signal peptide. The propeptide occupies 23–44 (MDEFDSDAEEDMLSLMANEQVR). The tract at residues 45 to 88 (AKACTPRLHDCSHDRHSCCRGELFKDVCYCFYPEGEDKTEVCSC) is knottin domain. Disulfide bonds link Cys-48/Cys-63, Cys-55/Cys-72, Cys-62/Cys-88, and Cys-74/Cys-86. The interval 89 to 108 (QQPKSHKYIEKVVDKARTVV) is linear cationic cytotoxin domain.

The protein belongs to the neurotoxin 19 (CSTX) family. 05 (U4-Lctx) subfamily. In terms of tissue distribution, expressed by the venom gland.

It localises to the secreted. Its function is as follows. Enhances the high-affinity desensitization of human P2RX3 purinoceptors. The sequence is that of U4-lycotoxin-Ls1d from Lycosa singoriensis (Wolf spider).